The following is a 424-amino-acid chain: UPF0053 protein MG146 homolog (424 aa).

The region spanning 6 to 191 (SGGLLALIII…EQNGLFTKED (186 aa)) is the CNNM transmembrane domain. 4 helical membrane passes run 7–27 (GGLL…SAVV), 71–91 (LITI…ILFL), 101–121 (AISS…LCEI), and 135–155 (LVYF…ITKL). CBS domains follow at residues 210 to 270 (MIKW…NEPF) and 275 to 335 (LLYP…EHDE).

The protein belongs to the UPF0053 family.

The protein localises to the cell membrane. This is UPF0053 protein MG146 homolog from Mycoplasma pneumoniae (strain ATCC 29342 / M129 / Subtype 1) (Mycoplasmoides pneumoniae).